Here is a 351-residue protein sequence, read N- to C-terminus: Ribosomal RNA large subunit methyltransferase M (351 aa).

Residues Ser-183, 216-219 (APGG), Asp-235, Asp-255, and Asp-271 contribute to the S-adenosyl-L-methionine site. Lys-300 serves as the catalytic Proton acceptor.

It belongs to the class I-like SAM-binding methyltransferase superfamily. RNA methyltransferase RlmE family. RlmM subfamily. As to quaternary structure, monomer.

It localises to the cytoplasm. The enzyme catalyses cytidine(2498) in 23S rRNA + S-adenosyl-L-methionine = 2'-O-methylcytidine(2498) in 23S rRNA + S-adenosyl-L-homocysteine + H(+). Catalyzes the 2'-O-methylation at nucleotide C2498 in 23S rRNA. The sequence is that of Ribosomal RNA large subunit methyltransferase M from Ectopseudomonas mendocina (strain ymp) (Pseudomonas mendocina).